Consider the following 64-residue polypeptide: Large ribosomal subunit protein uL29 (64 aa).

The protein belongs to the universal ribosomal protein uL29 family.

In Methanothermobacter thermautotrophicus (strain ATCC 29096 / DSM 1053 / JCM 10044 / NBRC 100330 / Delta H) (Methanobacterium thermoautotrophicum), this protein is Large ribosomal subunit protein uL29 (rpl29).